The sequence spans 348 residues: Noscapine synthase SDR1 (348 aa).

It belongs to the NAD(P)-dependent epimerase/dehydratase family.

The catalysed reaction is narcotine hemiacetal + NAD(+) = noscapine + NADH + H(+). The protein operates within alkaloid biosynthesis. In terms of biological role, oxidoreductase that catalyzes the last step in the biosynthesis of the benzylisoquinoline alkaloid noscapine. Converts narcotine hemiacetal to noscapine. This is Noscapine synthase SDR1 from Papaver somniferum (Opium poppy).